The chain runs to 230 residues: 2,3-bisphosphoglycerate-dependent phosphoglycerate mutase (230 aa).

Substrate-binding positions include 8 to 15, 21 to 22, arginine 60, 87 to 90, lysine 98, 114 to 115, and 183 to 184; these read RHGESEWN, TG, ERHY, RR, and GN. Catalysis depends on histidine 9, which acts as the Tele-phosphohistidine intermediate. The active-site Proton donor/acceptor is glutamate 87.

The protein belongs to the phosphoglycerate mutase family. BPG-dependent PGAM subfamily.

It catalyses the reaction (2R)-2-phosphoglycerate = (2R)-3-phosphoglycerate. It functions in the pathway carbohydrate degradation; glycolysis; pyruvate from D-glyceraldehyde 3-phosphate: step 3/5. Functionally, catalyzes the interconversion of 2-phosphoglycerate and 3-phosphoglycerate. This Streptococcus uberis (strain ATCC BAA-854 / 0140J) protein is 2,3-bisphosphoglycerate-dependent phosphoglycerate mutase.